We begin with the raw amino-acid sequence, 171 residues long: Probable tryptophan transport protein (171 aa).

The next 4 membrane-spanning stretches (helical) occupy residues 9-31, 58-80, 107-129, and 139-161; these read IINS…ILFG, GVVA…PNII, IITT…LIIV, and FITV…FVAV.

Belongs to the vitamin uptake transporter (VUT/ECF) (TC 2.A.88) family. TrpP subfamily.

Its subcellular location is the cell membrane. In terms of biological role, probably involved in tryptophan uptake. This Clostridium acetobutylicum (strain ATCC 824 / DSM 792 / JCM 1419 / IAM 19013 / LMG 5710 / NBRC 13948 / NRRL B-527 / VKM B-1787 / 2291 / W) protein is Probable tryptophan transport protein (trpP).